Reading from the N-terminus, the 238-residue chain is Orotidine 5'-phosphate decarboxylase (238 aa).

Substrate contacts are provided by residues aspartate 10, lysine 32, 59-68 (DLKLHDIPNT), threonine 122, arginine 184, glutamine 193, glycine 213, and arginine 214. The active-site Proton donor is lysine 61.

Belongs to the OMP decarboxylase family. Type 1 subfamily. Homodimer.

The catalysed reaction is orotidine 5'-phosphate + H(+) = UMP + CO2. The protein operates within pyrimidine metabolism; UMP biosynthesis via de novo pathway; UMP from orotate: step 2/2. Catalyzes the decarboxylation of orotidine 5'-monophosphate (OMP) to uridine 5'-monophosphate (UMP). This is Orotidine 5'-phosphate decarboxylase from Bacillus cereus (strain B4264).